The chain runs to 360 residues: Peptide chain release factor 1 (360 aa).

Gln-237 carries the N5-methylglutamine modification.

The protein belongs to the prokaryotic/mitochondrial release factor family. Post-translationally, methylated by PrmC. Methylation increases the termination efficiency of RF1.

Its subcellular location is the cytoplasm. Functionally, peptide chain release factor 1 directs the termination of translation in response to the peptide chain termination codons UAG and UAA. This Ectopseudomonas mendocina (strain ymp) (Pseudomonas mendocina) protein is Peptide chain release factor 1.